Consider the following 459-residue polypeptide: ATP-dependent protease ATPase subunit HslU (459 aa).

ATP contacts are provided by residues Val26, 68 to 73 (GVGKTE), Asp271, Glu337, and Arg409.

Belongs to the ClpX chaperone family. HslU subfamily. As to quaternary structure, a double ring-shaped homohexamer of HslV is capped on each side by a ring-shaped HslU homohexamer. The assembly of the HslU/HslV complex is dependent on binding of ATP.

Its subcellular location is the cytoplasm. Its function is as follows. ATPase subunit of a proteasome-like degradation complex; this subunit has chaperone activity. The binding of ATP and its subsequent hydrolysis by HslU are essential for unfolding of protein substrates subsequently hydrolyzed by HslV. HslU recognizes the N-terminal part of its protein substrates and unfolds these before they are guided to HslV for hydrolysis. The protein is ATP-dependent protease ATPase subunit HslU of Xylella fastidiosa (strain M12).